The chain runs to 125 residues: Ribonuclease P protein component (125 aa).

The protein belongs to the RnpA family. In terms of assembly, consists of a catalytic RNA component (M1 or rnpB) and a protein subunit.

The enzyme catalyses Endonucleolytic cleavage of RNA, removing 5'-extranucleotides from tRNA precursor.. Its function is as follows. RNaseP catalyzes the removal of the 5'-leader sequence from pre-tRNA to produce the mature 5'-terminus. It can also cleave other RNA substrates such as 4.5S RNA. The protein component plays an auxiliary but essential role in vivo by binding to the 5'-leader sequence and broadening the substrate specificity of the ribozyme. The protein is Ribonuclease P protein component of Clostridium botulinum (strain Eklund 17B / Type B).